Here is a 121-residue protein sequence, read N- to C-terminus: Ribosome-binding factor A (121 aa).

The protein belongs to the RbfA family. Monomer. Binds 30S ribosomal subunits, but not 50S ribosomal subunits or 70S ribosomes.

The protein resides in the cytoplasm. In terms of biological role, one of several proteins that assist in the late maturation steps of the functional core of the 30S ribosomal subunit. Associates with free 30S ribosomal subunits (but not with 30S subunits that are part of 70S ribosomes or polysomes). Required for efficient processing of 16S rRNA. May interact with the 5'-terminal helix region of 16S rRNA. The protein is Ribosome-binding factor A of Agathobacter rectalis (strain ATCC 33656 / DSM 3377 / JCM 17463 / KCTC 5835 / VPI 0990) (Eubacterium rectale).